The chain runs to 135 residues: Large ribosomal subunit protein uL16c (135 aa).

Residues 1–17 (MLSPKRTRFRKQHRGRM) show a composition bias toward basic residues. The segment at 1-21 (MLSPKRTRFRKQHRGRMKGVS) is disordered.

This sequence belongs to the universal ribosomal protein uL16 family. As to quaternary structure, part of the 50S ribosomal subunit.

The protein localises to the plastid. The protein resides in the chloroplast. This chain is Large ribosomal subunit protein uL16c, found in Amborella trichopoda.